A 582-amino-acid polypeptide reads, in one-letter code: Proline--tRNA ligase (582 aa).

The protein belongs to the class-II aminoacyl-tRNA synthetase family. ProS type 1 subfamily. As to quaternary structure, homodimer.

It localises to the cytoplasm. It carries out the reaction tRNA(Pro) + L-proline + ATP = L-prolyl-tRNA(Pro) + AMP + diphosphate. Functionally, catalyzes the attachment of proline to tRNA(Pro) in a two-step reaction: proline is first activated by ATP to form Pro-AMP and then transferred to the acceptor end of tRNA(Pro). As ProRS can inadvertently accommodate and process non-cognate amino acids such as alanine and cysteine, to avoid such errors it has two additional distinct editing activities against alanine. One activity is designated as 'pretransfer' editing and involves the tRNA(Pro)-independent hydrolysis of activated Ala-AMP. The other activity is designated 'posttransfer' editing and involves deacylation of mischarged Ala-tRNA(Pro). The misacylated Cys-tRNA(Pro) is not edited by ProRS. This chain is Proline--tRNA ligase, found in Mycolicibacterium paratuberculosis (strain ATCC BAA-968 / K-10) (Mycobacterium paratuberculosis).